The chain runs to 187 residues: Elongation factor P (187 aa).

Belongs to the elongation factor P family.

The protein localises to the cytoplasm. The protein operates within protein biosynthesis; polypeptide chain elongation. Involved in peptide bond synthesis. Stimulates efficient translation and peptide-bond synthesis on native or reconstituted 70S ribosomes in vitro. Probably functions indirectly by altering the affinity of the ribosome for aminoacyl-tRNA, thus increasing their reactivity as acceptors for peptidyl transferase. This chain is Elongation factor P, found in Azobacteroides pseudotrichonymphae genomovar. CFP2.